The chain runs to 478 residues: MSDAPPQPENEQECMCTQDKVLQFLNKMADESGIKDLTDPALAEFLSDSDALKEIRDLFHYPKAGTLPDADPSLVDPESDSIYLCGNSLGLMPKATGEVMKDHLDKWAKMGVFGHMSGEVPWAHCDEYCLEGVGRLVGAKKEEVSVCNSLTVNIHVLLTSFYKPTETRHKILLESKAFPSDHYAIESQIRLKGRTVQDSMVCLEPREGEETLRTEDILDYIEKNGDEIAIVFFSGIQYYTGQLFDMRAITEAGHRKGCFVGFDLAHAFANVPLHLHWWDVDFACWCSYKYGCTGAGSIGGLFVHERFLNDQRERMLGWWSHKMSSRFVMDNVLDLDEGAAGYRISNPPIHTVAAMLGSLKVFDQVSLENLRSRSCYLTGYLEYLVKTLFGENSEQRTTKLSISIITPEEFHQRGCQLSLKFSSPIDIIYPELVKRGCAVDKRYPNVIRVAPVHLYNNYVDIRRFISVLQEVAHIVESE.

Residues leucine 150, threonine 151, 178–181 (FPSD), serine 234, aspartate 263, histidine 266, and tyrosine 288 contribute to the pyridoxal 5'-phosphate site. Lysine 289 is subject to N6-(pyridoxal phosphate)lysine. Tryptophan 318 and asparagine 346 together coordinate pyridoxal 5'-phosphate.

Belongs to the kynureninase family. Homodimer. Pyridoxal 5'-phosphate is required as a cofactor.

The protein resides in the cytoplasm. It catalyses the reaction L-kynurenine + H2O = anthranilate + L-alanine + H(+). It carries out the reaction 3-hydroxy-L-kynurenine + H2O = 3-hydroxyanthranilate + L-alanine + H(+). The protein operates within amino-acid degradation; L-kynurenine degradation; L-alanine and anthranilate from L-kynurenine: step 1/1. Its pathway is cofactor biosynthesis; NAD(+) biosynthesis; quinolinate from L-kynurenine: step 2/3. In terms of biological role, catalyzes the cleavage of L-kynurenine (L-Kyn) and L-3-hydroxykynurenine (L-3OHKyn) into anthranilic acid (AA) and 3-hydroxyanthranilic acid (3-OHAA), respectively. In Caenorhabditis elegans, this protein is Kynureninase.